The chain runs to 174 residues: Myeloid-derived growth factor (174 aa).

A signal peptide spans 1–32; that stretch reads MAAPSGRRNGSGGANLWVSLLLAAAALRPVET.

Belongs to the MYDGF family.

Its subcellular location is the secreted. The protein localises to the endoplasmic reticulum-Golgi intermediate compartment. It localises to the endoplasmic reticulum. The protein resides in the golgi apparatus. Its function is as follows. Bone marrow-derived monocyte and paracrine-acting protein that promotes cardiac myocyte survival and adaptive angiogenesis for cardiac protection and/or repair after myocardial infarction (MI). Stimulates endothelial cell proliferation through a MAPK1/3-, STAT3- and CCND1-mediated signaling pathway. Inhibits cardiac myocyte apoptosis in a PI3K/AKT-dependent signaling pathway. This is Myeloid-derived growth factor from Bos taurus (Bovine).